Here is a 236-residue protein sequence, read N- to C-terminus: Phosphoribosylaminoimidazole-succinocarboxamide synthase (236 aa).

The protein belongs to the SAICAR synthetase family.

It catalyses the reaction 5-amino-1-(5-phospho-D-ribosyl)imidazole-4-carboxylate + L-aspartate + ATP = (2S)-2-[5-amino-1-(5-phospho-beta-D-ribosyl)imidazole-4-carboxamido]succinate + ADP + phosphate + 2 H(+). It participates in purine metabolism; IMP biosynthesis via de novo pathway; 5-amino-1-(5-phospho-D-ribosyl)imidazole-4-carboxamide from 5-amino-1-(5-phospho-D-ribosyl)imidazole-4-carboxylate: step 1/2. The polypeptide is Phosphoribosylaminoimidazole-succinocarboxamide synthase (Wolinella succinogenes (strain ATCC 29543 / DSM 1740 / CCUG 13145 / JCM 31913 / LMG 7466 / NCTC 11488 / FDC 602W) (Vibrio succinogenes)).